Consider the following 123-residue polypeptide: Large ribosomal subunit protein bL12 (123 aa).

The protein belongs to the bacterial ribosomal protein bL12 family. In terms of assembly, homodimer. Part of the ribosomal stalk of the 50S ribosomal subunit. Forms a multimeric L10(L12)X complex, where L10 forms an elongated spine to which 2 to 4 L12 dimers bind in a sequential fashion. Binds GTP-bound translation factors.

In terms of biological role, forms part of the ribosomal stalk which helps the ribosome interact with GTP-bound translation factors. Is thus essential for accurate translation. The sequence is that of Large ribosomal subunit protein bL12 from Bacillus licheniformis (strain ATCC 14580 / DSM 13 / JCM 2505 / CCUG 7422 / NBRC 12200 / NCIMB 9375 / NCTC 10341 / NRRL NRS-1264 / Gibson 46).